Reading from the N-terminus, the 340-residue chain is Phosphate acyltransferase (340 aa).

This sequence belongs to the PlsX family. As to quaternary structure, homodimer. Probably interacts with PlsY.

Its subcellular location is the cytoplasm. The catalysed reaction is a fatty acyl-[ACP] + phosphate = an acyl phosphate + holo-[ACP]. It participates in lipid metabolism; phospholipid metabolism. Its function is as follows. Catalyzes the reversible formation of acyl-phosphate (acyl-PO(4)) from acyl-[acyl-carrier-protein] (acyl-ACP). This enzyme utilizes acyl-ACP as fatty acyl donor, but not acyl-CoA. This is Phosphate acyltransferase from Pseudomonas savastanoi pv. phaseolicola (strain 1448A / Race 6) (Pseudomonas syringae pv. phaseolicola (strain 1448A / Race 6)).